We begin with the raw amino-acid sequence, 237 residues long: Oil body-associated protein 2C (237 aa).

The protein belongs to the OBAP family.

The protein is Oil body-associated protein 2C of Arabidopsis thaliana (Mouse-ear cress).